Here is a 214-residue protein sequence, read N- to C-terminus: Small ribosomal subunit protein uS5 (214 aa).

One can recognise an S5 DRBM domain in the interval 54 to 117; the sequence is LKYEVVDIKV…RDAKMNIIPV (64 aa).

Belongs to the universal ribosomal protein uS5 family. As to quaternary structure, part of the 30S ribosomal subunit. Contacts protein S4.

Its function is as follows. With S4 and S12 plays an important role in translational accuracy. This is Small ribosomal subunit protein uS5 from Saccharolobus solfataricus (strain ATCC 35092 / DSM 1617 / JCM 11322 / P2) (Sulfolobus solfataricus).